The primary structure comprises 989 residues: Cellulose synthase A catalytic subunit 4 [UDP-forming] (989 aa).

Over 1–184 (MMESGVPPCA…SRIIPISKNK (184 aa)) the chain is Cytoplasmic. Residues C9, C12, C20, C23, C28, C31, C43, and C46 each coordinate Zn(2+). The RING-type; degenerate zinc finger occupies 9-47 (CAACGDDAHAACRACSYALCKACLDEDAAEGRTTCARCG). Residues 138–149 (KKEKKASAKKAA) show a composition bias toward basic residues. The disordered stretch occupies residues 138–158 (KKEKKASAKKAAAKAQAPPVE). The helical transmembrane segment at 185–205 (LTPYRAVIIMRLVVLGLFFHY) threads the bilayer. The Extracellular portion of the chain corresponds to 206-213 (RITNPVYS). Residues 214-234 (AFGLWMTSVICEIWFGFSWIL) traverse the membrane as a helical segment. Residues 235–772 (DQFPKWCPIN…INTIVYPFTS (538 aa)) lie on the Cytoplasmic side of the membrane. 4 residues coordinate UDP-alpha-D-glucose: S272, K278, E279, and D308. D308 is a catalytic residue. A coiled-coil region spans residues 362 to 389 (VKERRAMKRDYEEYKVRINALVAKAQKT). UDP-alpha-D-glucose is bound at residue K449. Mn(2+) is bound by residues K450 and D474. D688 is a catalytic residue. Residues 773 to 793 (LPLIAYCCLPAICLLTGKFII) traverse the membrane as a helical segment. Residues 794–798 (PTLSN) lie on the Extracellular side of the membrane. A helical membrane pass occupies residues 799-819 (AATIWFLGLFISIIVTSVLEL). The Cytoplasmic segment spans residues 820-835 (RWSGIGIEDWWRNEQF). A helical membrane pass occupies residues 836–856 (WVIGGVSAHLFAVFQGILKMI). The Extracellular segment spans residues 857 to 884 (AGLDTNFTVTAKATDDTEFGELYVFKWT). N-linked (GlcNAc...) asparagine glycosylation is present at N862. A helical transmembrane segment spans residues 885–905 (TVLIPPTSILVLNLVGVVAGF). Residues 906 to 916 (SDALNSGYESW) are Cytoplasmic-facing. A helical membrane pass occupies residues 917 to 937 (GPLFGKVFFAMWVIMHLYPFL). Residues 938–946 (KGLMGRQNR) are Extracellular-facing. A helical membrane pass occupies residues 947 to 967 (TPTIVVLWSVLLASVFSLLWV). The Cytoplasmic portion of the chain corresponds to 968 to 989 (KIDPFIGSSETTTTNSCANFDC).

This sequence belongs to the glycosyltransferase 2 family. Plant cellulose synthase subfamily. Mn(2+) serves as cofactor. Zn(2+) is required as a cofactor.

It localises to the cell membrane. The catalysed reaction is [(1-&gt;4)-beta-D-glucosyl](n) + UDP-alpha-D-glucose = [(1-&gt;4)-beta-D-glucosyl](n+1) + UDP + H(+). It functions in the pathway glycan metabolism; plant cellulose biosynthesis. Catalytic subunit of cellulose synthase terminal complexes ('rosettes'), required for beta-1,4-glucan microfibril crystallization, a major mechanism of the cell wall formation. Involved in the secondary cell wall formation. The protein is Cellulose synthase A catalytic subunit 4 [UDP-forming] (CESA4) of Oryza sativa subsp. japonica (Rice).